The primary structure comprises 592 residues: Ichor (592 aa).

Over residues 114 to 123 (NNNYMQSAYH) the composition is skewed to polar residues. 4 disordered regions span residues 114–156 (NNNY…VSSS), 343–377 (LQNRLQNGPPNGNSSGGGGGANQGAGIKGDPQAPT), 416–439 (LSNPTNNQATGNLHQQGGYSMQAS), and 459–527 (HTTT…DLSG). The segment covering 124–148 (PQNQSNPTSTTQSNGGSNSNSNNSN) has biased composition (low complexity). Residues 356–369 (SSGGGGGANQGAGI) are compositionally biased toward gly residues. Over residues 459–469 (HTTTASTTGSE) the composition is skewed to polar residues. A compositionally biased stretch (low complexity) spans 488-500 (QQQQQQQQQQQQQ). The span at 507 to 524 (PTTPQMSAISPSGFSASD) shows a compositional bias: polar residues. C2H2-type zinc fingers lie at residues 536–558 (HRCSICNRGFLNKSNIKVHLRTH) and 564–586 (FRCDVCAKAFRQKAHLLKHQQIH).

The protein resides in the nucleus. Functionally, transcriptional activator. In tracheal terminal cells, regulates the transcription of factors involved in the formation of a mature apical extracellular matrix (aECM) which is essential for the integrity and shape of seamless tubes. The sequence is that of Ichor from Drosophila melanogaster (Fruit fly).